A 262-amino-acid polypeptide reads, in one-letter code: Chondroitin proteoglycan 3 (262 aa).

The signal sequence occupies residues 1–17 (MRSSFIFALLLIGAALA). The segment at 37–68 (FSGEASGEASGEASGEFSGEGSGEGSGELSPE) is disordered. Over residues 39 to 53 (GEASGEASGEASGEF) the composition is skewed to low complexity. N-linked (GlcNAc...) asparagine glycosylation is found at asparagine 140, asparagine 148, and asparagine 224.

The protein is Chondroitin proteoglycan 3 (cpg-3) of Caenorhabditis briggsae.